Consider the following 360-residue polypeptide: Peptide chain release factor 1 (360 aa).

The residue at position 237 (glutamine 237) is an N5-methylglutamine.

It belongs to the prokaryotic/mitochondrial release factor family. In terms of processing, methylated by PrmC. Methylation increases the termination efficiency of RF1.

It localises to the cytoplasm. Functionally, peptide chain release factor 1 directs the termination of translation in response to the peptide chain termination codons UAG and UAA. The polypeptide is Peptide chain release factor 1 (Pseudomonas fluorescens (strain ATCC BAA-477 / NRRL B-23932 / Pf-5)).